Consider the following 146-residue polypeptide: Angiogenin (146 aa).

Residues 1 to 24 (MAMSLCPLLLVFVLGLGLTPPSLA) form the signal peptide. Q25 is modified (pyrrolidone carboxylic acid). The active-site Proton acceptor is the H37. Residue R45 coordinates tRNA. 3 disulfide bridges follow: C50–C105, C63–C116, and C81–C131. Residues 55-59 (VRRHL) carry the Nucleolar localization signal motif. TRNA-binding residues include C105 and I127. H138 serves as the catalytic Proton donor.

Belongs to the pancreatic ribonuclease family. As to quaternary structure, homodimer. Interacts with RNH1; inhibiting ANG ribonuclease activity. Interacts with PCNA.

The protein resides in the secreted. It is found in the nucleus. Its subcellular location is the nucleolus. It localises to the cytoplasm. The protein localises to the stress granule. With respect to regulation, has weak tRNA ribonuclease activity by itself due to partial autoinhibition by its C-terminus, which folds into a short alpha-helix that partially occludes the substrate-binding site. In absence of stress, the ribonuclease activity is inhibited by RNH1 in the cytoplasm. In response to stress, dissociates from RNH1 in the cytoplasm and associates with cytoplasmic ribosomes with vacant A-sites: ribosomes directly activate the tRNA ribonuclease activity of ANG by refolding the C-terminal alpha-helix. In response to stress, the angiogenic activity of ANG is inhibited by RNH1 in the nucleus. Secreted ribonuclease that can either promote or restrict cell proliferation of target cells, depending on the context. Endocytosed in target cells via its receptor PLXNB2 and translocates to the cytoplasm or nucleus. Under stress conditions, localizes to the cytoplasm and promotes the assembly of stress granules (SGs): specifically cleaves a subset of tRNAs within anticodon loops to produce tRNA-derived stress-induced fragments (tiRNAs), resulting in translation repression and inhibition of cell proliferation. tiRNas also prevent formation of apoptosome, thereby promoting cell survival. Preferentially cleaves RNAs between a pyrimidine and an adenosine residue, suggesting that it cleaves the anticodon loop of tRNA(Ala) (32-UUAGCAU-38) after positions 33 and 36. Cleaves a subset of tRNAs, including tRNA(Ala), tRNA(Glu), tRNA(Gly), tRNA(Lys), tRNA(Val), tRNA(His), tRNA(Asp) and tRNA(Sec). Under growth conditions and in differentiated cells, translocates to the nucleus and stimulates ribosomal RNA (rRNA) transcription, including that containing the initiation site sequences of 45S rRNA, thereby promoting cell growth and proliferation. Angiogenin induces vascularization of normal and malignant tissues via its ability to promote rRNA transcription. Involved in hematopoietic stem and progenitor cell (HSPC) growth and survival by promoting rRNA transcription in growth conditions and inhibiting translation in response to stress, respectively. Mediates the crosstalk between myeloid and intestinal epithelial cells to protect the intestinal epithelial barrier integrity: secreted by myeloid cells and promotes intestinal epithelial cells proliferation and survival. Also mediates osteoclast-endothelial cell crosstalk in growing bone: produced by osteoclasts and protects the neighboring vascular cells against senescence by promoting rRNA transcription. This Equus caballus (Horse) protein is Angiogenin (ANG).